The primary structure comprises 265 residues: Formyltransferase/hydrolase complex Fhc subunit C (265 aa).

The protein belongs to the FwdC/FmdC family. As to quaternary structure, octaheteromer. Part of the formyltransferase/hydrolase complex fhc; composed of FhcA, FhcB, FhcC and FhcD.

The protein localises to the cytoplasm. The protein operates within one-carbon metabolism; formaldehyde degradation; formate from formaldehyde (H(4)MPT route): step 4/5. In terms of biological role, involved in the transformation of 5-formyl tetrahydromethanopterin (5-formyl-H(4)MPT) to methanofuran (MFR) and formate via the formylmethanofuran (formyl-MFR). The protein is Formyltransferase/hydrolase complex Fhc subunit C (fhcC) of Methylorubrum extorquens (strain ATCC 14718 / DSM 1338 / JCM 2805 / NCIMB 9133 / AM1) (Methylobacterium extorquens).